The primary structure comprises 109 residues: Large ribosomal subunit protein bL31B (109 aa).

The interval 79–109 (NVRQPAQQPQPEEDALPAAKGKKKVVTKKKK) is disordered. The span at 98 to 109 (KGKKKVVTKKKK) shows a compositional bias: basic residues.

Belongs to the bacterial ribosomal protein bL31 family. Type B subfamily. As to quaternary structure, part of the 50S ribosomal subunit.

The protein is Large ribosomal subunit protein bL31B of Chlamydia pneumoniae (Chlamydophila pneumoniae).